The chain runs to 146 residues: Calmodulin-like protein 5 (146 aa).

A2 carries the N-acetylalanine modification. EF-hand domains lie at 8–43 (EEEA…TGKN), 44–74 (LSEA…TAAK), 78–113 (AGLE…LGQP), and 114–146 (LPQE…LAQE). The Ca(2+) site is built by D21, D23, N25, T27, E32, D57, D59, D61, E63, E68, D91, D93, D95, H97, E102, D127, D129, D131, R133, and E138.

In terms of assembly, associates with transglutaminase 3. In terms of tissue distribution, particularly abundant in the epidermis where its expression is directly related to keratinocyte differentiation. Very low expression in lung.

Its function is as follows. Binds calcium. May be involved in terminal differentiation of keratinocytes. This chain is Calmodulin-like protein 5 (CALML5), found in Homo sapiens (Human).